The primary structure comprises 540 residues: T-complex protein 1 subunit delta (540 aa).

Residues 1–12 show a composition bias toward low complexity; that stretch reads MPPAVPAAAATA. Positions 1-32 are disordered; that stretch reads MPPAVPAAAATARQSASGRERNFKDKDKPESV. Positions 18–31 are enriched in basic and acidic residues; sequence GRERNFKDKDKPES.

It belongs to the TCP-1 chaperonin family. In terms of assembly, heterooligomeric complex of about 850 to 900 kDa that forms two stacked rings, 12 to 16 nm in diameter.

It is found in the cytoplasm. Functionally, molecular chaperone; assists the folding of proteins upon ATP hydrolysis. Known to play a role, in vitro, in the folding of actin and tubulin. The polypeptide is T-complex protein 1 subunit delta (cct-4) (Caenorhabditis elegans).